Here is a 337-residue protein sequence, read N- to C-terminus: Mycothiol acetyltransferase (337 aa).

2 N-acetyltransferase domains span residues 11-151 (LDER…FELP) and 154-337 (VRLR…MYRK). 1D-myo-inositol 2-(L-cysteinylamino)-2-deoxy-alpha-D-glucopyranoside is bound at residue Glu-37. Residue 81–83 (LVI) participates in acetyl-CoA binding. Glu-182 is a binding site for 1D-myo-inositol 2-(L-cysteinylamino)-2-deoxy-alpha-D-glucopyranoside. The interval 210 to 246 (RPTGSGDGDVADGGSTDGGPADSGSADGGAGEGGTGD) is disordered. Residues 221-234 (DGGSTDGGPADSGS) show a composition bias toward low complexity. Residues 235-246 (ADGGAGEGGTGD) show a composition bias toward gly residues. Residues Lys-257 and Glu-271 each contribute to the 1D-myo-inositol 2-(L-cysteinylamino)-2-deoxy-alpha-D-glucopyranoside site. Acetyl-CoA-binding positions include 275 to 277 (VGV) and 282 to 288 (QGGGLGR). A 1D-myo-inositol 2-(L-cysteinylamino)-2-deoxy-alpha-D-glucopyranoside-binding site is contributed by Tyr-309. 314 to 319 (NTAAIR) is a binding site for acetyl-CoA.

This sequence belongs to the acetyltransferase family. MshD subfamily. In terms of assembly, monomer.

It carries out the reaction 1D-myo-inositol 2-(L-cysteinylamino)-2-deoxy-alpha-D-glucopyranoside + acetyl-CoA = mycothiol + CoA + H(+). Functionally, catalyzes the transfer of acetyl from acetyl-CoA to desacetylmycothiol (Cys-GlcN-Ins) to form mycothiol. This is Mycothiol acetyltransferase from Streptosporangium roseum (strain ATCC 12428 / DSM 43021 / JCM 3005 / KCTC 9067 / NCIMB 10171 / NRRL 2505 / NI 9100).